We begin with the raw amino-acid sequence, 1162 residues long: Leptin receptor (1162 aa).

Positions 1 to 21 are cleaved as a signal peptide; it reads MTCQKFYVVLLHWEFLYVITA. The Extracellular segment spans residues 22–839; that stretch reads LNLAYPTSPW…DIAKQQNDAG (818 aa). Cystine bridges form between cysteine 37–cysteine 90, cysteine 89–cysteine 99, cysteine 131–cysteine 142, cysteine 186–cysteine 195, and cysteine 188–cysteine 193. Residues asparagine 55, asparagine 56, asparagine 73, and asparagine 98 are each glycosylated (N-linked (GlcNAc...) asparagine). Asparagine 187 carries an N-linked (GlcNAc...) asparagine glycan. A Fibronectin type-III 1 domain is found at 238–331; that stretch reads PPLGLRMEVT…LPQLFTTQDV (94 aa). N-linked (GlcNAc...) asparagine glycans are attached at residues asparagine 275, asparagine 345, and asparagine 356. 2 disulfide bridges follow: cysteine 350-cysteine 410 and cysteine 411-cysteine 416. N-linked (GlcNAc...) asparagine glycosylation occurs at asparagine 431. 3 disulfide bridges follow: cysteine 434/cysteine 445, cysteine 471/cysteine 526, and cysteine 486/cysteine 496. Residues 465–482 form a leptin-binding region; that stretch reads HRRSLYCPDNPSIRPTSE. Asparagine 514, asparagine 622, asparagine 657, asparagine 668, asparagine 686, asparagine 695, asparagine 698, and asparagine 726 each carry an N-linked (GlcNAc...) asparagine glycan. Fibronectin type-III domains follow at residues 537–632, 637–729, and 738–831; these read PPSN…TLVM, PMRG…NLTF, and AVQS…KDDI. A WSXWS motif motif is present at residues 620–624; sequence WSNWS. Residues 840 to 860 form a helical membrane-spanning segment; the sequence is LYVIVPIIISSCVLLLGTLLI. Residues 861 to 1162 lie on the Cytoplasmic side of the membrane; sequence SHQRMKKLFW…IENKMCDLTV (302 aa). The Box 1 motif motif lies at 869–877; sequence FWDDVPNPK. Serine 880 carries the phosphoserine modification. Positions 891–896 are required for JAK2 activation; sequence ETFEHL. The tract at residues 896–904 is required for STAT3 phosphorylation; sequence LFTKHAESV. Tyrosine 985 carries the post-translational modification Phosphotyrosine; by JAK2. The residue at position 1077 (tyrosine 1077) is a Phosphotyrosine. Tyrosine 1138 carries the phosphotyrosine; by JAK2 modification.

The protein belongs to the type I cytokine receptor family. Type 2 subfamily. In terms of assembly, present as a mixture of monomers and dimers. The phosphorylated receptor binds a number of SH2 domain-containing proteins such as JAK2, STAT3, PTPN11, and SOCS3. Interaction with SOCS3 inhibits JAK/STAT signaling and MAPK cascade. On ligand binding, phosphorylated on two conserved C-terminal tyrosine residues (isoform B only) by JAK2. Tyr-985 is required for complete binding and activation of PTPN11, ERK/FOS activation,for interaction with SOCS3 and SOCS3 mediated inhibition of leptin signaling. Phosphorylation on Tyr-1138 is required for STAT3 binding/activation. Phosphorylation of Tyr-1077 has a more accessory role. As to expression, isoform B is expressed in kidney, liver, lung, ovary, spleen and uterus. Increased level in uterus during gestation. Isoform A and isoform C are predominantly expressed in cerebral microvessels and choroid plexus, with lower levels in cortex, cerebellum and hypothalamus but also liver and lung. Isoform F is expressed at high levels in brain, liver and spleen and less in stomach, kidney, thymus, heart, lung and hypothalamus.

It is found in the cell membrane. The protein resides in the basolateral cell membrane. Its subcellular location is the secreted. Receptor for hormone LEP/leptin. On ligand binding, mediates LEP central and peripheral effects through the activation of different signaling pathways such as JAK2/STAT3 and MAPK cascade/FOS. In the hypothalamus, LEP acts as an appetite-regulating factor that induces a decrease in food intake and an increase in energy consumption by inducing anorexinogenic factors and suppressing orexigenic neuropeptides, also regulates bone mass and secretion of hypothalamo-pituitary-adrenal hormones. In the periphery, increases basal metabolism, influences reproductive function, regulates pancreatic beta-cell function and insulin secretion, is pro-angiogenic and affects innate and adaptive immunity. Control of energy homeostasis and melanocortin production (stimulation of POMC and full repression of AgRP transcription) is mediated by STAT3 signaling, whereas distinct signals regulate NPY and the control of fertility, growth and glucose homeostasis. Involved in the regulation of counter-regulatory response to hypoglycemia by inhibiting neurons of the parabrachial nucleus. Has a specific effect on T lymphocyte responses, differentially regulating the proliferation of naive and memory T-cells. Leptin increases Th1 and suppresses Th2 cytokine production. Its function is as follows. May transport LEP across the blood-brain barrier. Binds LEP and mediates LEP endocytosis. Does not induce phosphorylation of and activate STAT3. In terms of biological role, antagonizes Isoform A and isoform B-mediated LEP binding and endocytosis. The chain is Leptin receptor (Lepr) from Rattus norvegicus (Rat).